The following is a 356-amino-acid chain: Peptide chain release factor 1 (356 aa).

Residue Gln233 is modified to N5-methylglutamine.

Belongs to the prokaryotic/mitochondrial release factor family. Post-translationally, methylated by PrmC. Methylation increases the termination efficiency of RF1.

The protein localises to the cytoplasm. Peptide chain release factor 1 directs the termination of translation in response to the peptide chain termination codons UAG and UAA. The polypeptide is Peptide chain release factor 1 (Syntrophotalea carbinolica (strain DSM 2380 / NBRC 103641 / GraBd1) (Pelobacter carbinolicus)).